We begin with the raw amino-acid sequence, 164 residues long: Phosphopantetheine adenylyltransferase (164 aa).

Residue Ser9 coordinates substrate. ATP is bound by residues 9 to 10 (SF) and His17. The substrate site is built by Lys41, Leu73, and Lys87. ATP-binding positions include 88–90 (GLR), Glu98, and 122–128 (YSYLSSS).

The protein belongs to the bacterial CoaD family. Homohexamer. Mg(2+) is required as a cofactor.

The protein localises to the cytoplasm. The catalysed reaction is (R)-4'-phosphopantetheine + ATP + H(+) = 3'-dephospho-CoA + diphosphate. Its pathway is cofactor biosynthesis; coenzyme A biosynthesis; CoA from (R)-pantothenate: step 4/5. In terms of biological role, reversibly transfers an adenylyl group from ATP to 4'-phosphopantetheine, yielding dephospho-CoA (dPCoA) and pyrophosphate. This chain is Phosphopantetheine adenylyltransferase, found in Rhodococcus opacus (strain B4).